Consider the following 258-residue polypeptide: UPF0246 protein YaaA (258 aa).

Belongs to the UPF0246 family.

This is UPF0246 protein YaaA from Escherichia coli O7:K1 (strain IAI39 / ExPEC).